The sequence spans 184 residues: Small ribosomal subunit protein eS8 (184 aa).

Residues 1–23 (MGISRDSRHKRRLTGGRYPVHKK) form a disordered region. Positions 7–23 (SRHKRRLTGGRYPVHKK) are enriched in basic residues.

This sequence belongs to the eukaryotic ribosomal protein eS8 family.

The polypeptide is Small ribosomal subunit protein eS8 (RPS8) (Theileria annulata).